A 468-amino-acid chain; its full sequence is FAD-linked oxidoreductase hasG (468 aa).

An FAD-binding PCMH-type domain is found at 37–211 (LGKIPAAVVQ…VEATFRAYPW (175 aa)).

The protein belongs to the oxygen-dependent FAD-linked oxidoreductase family. The cofactor is FAD.

It functions in the pathway secondary metabolite biosynthesis. In terms of biological role, FAD-linked oxidoreductase; part of the gene cluster that mediates the biosynthesis of hexadehydro-astechrome (HAS), a tryptophan-derived iron(III)-complex that acts as a virulence factor in infected mice. Within the pathway, hasG converts the prenyl to a methylbutadienyl side chain. The HAS biosynthesis begins with the synthesis of a tethered Trp-Ala dipeptide by the NRPS hasD. The 7-dimethylallyltryptophan synthase hasE then catalyzes the prenylation of the hasD-tethered tryptophan or the resulting tethered Trp-Ala dipeptide at the C-7 position of the indole moiety. HAS biosynthesis continues via tethered intermediates with the succesive actions of the cytochrome P450 monooxygenase hasH, the O-methyltransferase hasC, and the FAD-linked oxidoreductase hasG. The resulting O-methylated diketopiperazine is then released from hasD. Finally, three O-methylated diketopiperazine molecules assemble in a trimeric complex with Fe(III) to produce hexadehydro-astechrome. In Aspergillus fumigatus (strain CBS 144.89 / FGSC A1163 / CEA10) (Neosartorya fumigata), this protein is FAD-linked oxidoreductase hasG.